A 200-amino-acid polypeptide reads, in one-letter code: UPF0301 protein BR0480/BS1330_I0481 (200 aa).

It belongs to the UPF0301 (AlgH) family.

This is UPF0301 protein BR0480/BS1330_I0481 from Brucella suis biovar 1 (strain 1330).